A 234-amino-acid chain; its full sequence is Uridylate kinase (234 aa).

Residues 8 to 11, glycine 51, and arginine 55 each bind ATP; that span reads KLSG. Residues aspartate 68 and 129–136 each bind UMP; that span reads TSNPFFTT. Residues threonine 156, tyrosine 162, and aspartate 165 each coordinate ATP.

The protein belongs to the UMP kinase family. As to quaternary structure, homohexamer.

Its subcellular location is the cytoplasm. The catalysed reaction is UMP + ATP = UDP + ADP. Its pathway is pyrimidine metabolism; CTP biosynthesis via de novo pathway; UDP from UMP (UMPK route): step 1/1. With respect to regulation, inhibited by UTP. In terms of biological role, catalyzes the reversible phosphorylation of UMP to UDP. The chain is Uridylate kinase from Fervidobacterium nodosum (strain ATCC 35602 / DSM 5306 / Rt17-B1).